The following is a 206-amino-acid chain: MARYTGPVCKLCRAVGMKLYLKGIRCSSPKCAIERRNFRPGVHGQARQKLSEYAIRLKEKQKARWSYGVLEKQFRRTFSDASRATGNTGAKFLELLERRLDNVVYRLGFATSRAQARQWVNHGHFAVNGRRVSIPSYRVRPGDAITVMPNSAAFVKEALEAASLPQAPKWLEANRETLAATVKALPEREDIDTPVQELLIVEFYSR.

The 79-residue stretch at 98–176 (RRLDNVVYRL…APKWLEANRE (79 aa)) folds into the S4 RNA-binding domain.

Belongs to the universal ribosomal protein uS4 family. As to quaternary structure, part of the 30S ribosomal subunit. Contacts protein S5. The interaction surface between S4 and S5 is involved in control of translational fidelity.

In terms of biological role, one of the primary rRNA binding proteins, it binds directly to 16S rRNA where it nucleates assembly of the body of the 30S subunit. With S5 and S12 plays an important role in translational accuracy. The protein is Small ribosomal subunit protein uS4 of Gloeobacter violaceus (strain ATCC 29082 / PCC 7421).